The primary structure comprises 115 residues: Nucleoid-associated protein Npun_F0448 (115 aa).

Belongs to the YbaB/EbfC family. As to quaternary structure, homodimer.

The protein localises to the cytoplasm. It is found in the nucleoid. Functionally, binds to DNA and alters its conformation. May be involved in regulation of gene expression, nucleoid organization and DNA protection. This Nostoc punctiforme (strain ATCC 29133 / PCC 73102) protein is Nucleoid-associated protein Npun_F0448.